The primary structure comprises 432 residues: Adenylosuccinate synthetase (432 aa).

Residues 13–19 and 41–43 each bind GTP; these read GDEGKGK and GHT. Aspartate 14 (proton acceptor) is an active-site residue. The Mg(2+) site is built by aspartate 14 and glycine 41. Residues 14–17, 39–42, threonine 130, arginine 144, glutamine 225, threonine 240, and arginine 304 contribute to the IMP site; these read DEGK and NAGH. Histidine 42 acts as the Proton donor in catalysis. 300 to 306 serves as a coordination point for substrate; sequence STTGRPR. GTP is bound by residues arginine 306, 332-334, and 416-418; these read KLD and STG.

The protein belongs to the adenylosuccinate synthetase family. In terms of assembly, homodimer. Mg(2+) is required as a cofactor.

It localises to the cytoplasm. It catalyses the reaction IMP + L-aspartate + GTP = N(6)-(1,2-dicarboxyethyl)-AMP + GDP + phosphate + 2 H(+). The protein operates within purine metabolism; AMP biosynthesis via de novo pathway; AMP from IMP: step 1/2. Functionally, plays an important role in the de novo pathway of purine nucleotide biosynthesis. Catalyzes the first committed step in the biosynthesis of AMP from IMP. In Nitrosomonas eutropha (strain DSM 101675 / C91 / Nm57), this protein is Adenylosuccinate synthetase.